The chain runs to 322 residues: MEHVVYVVGHKNPDTDSVCSAIAFAYLWNKWKEGGNVAKMMKIEAEAKPVIQGDVNPETKYVLEKFGFEVPEIMTNGEGKKVALVDHSEKAQTVDGIDKAEVVAIVDHHKIGDVTTPQPILFVNLPVGCTATVIKLLFDKTGVEIPKDIAGILLSSILSDTVIFKSATTTELDKEVAEELAKIAGIDDLTKFGVEIKAKLSAVDDLTAMDIIKRDYKDFDMSGKKVGVGQIELVDLSLIESRIDEIYEAMKKMKEEGGYAGIFLMLTDIMKEGTELLVVTDYPEVVEKAFGKKLEGKSVWLDGVMSRKKQVVPPLEKAFAEL.

Mn(2+)-binding residues include H10, D14, D16, D86, H108, and D160.

The protein belongs to the PPase class C family. Mn(2+) serves as cofactor.

The protein resides in the cytoplasm. The enzyme catalyses diphosphate + H2O = 2 phosphate + H(+). This is Probable manganese-dependent inorganic pyrophosphatase (ppaC) from Archaeoglobus fulgidus (strain ATCC 49558 / DSM 4304 / JCM 9628 / NBRC 100126 / VC-16).